We begin with the raw amino-acid sequence, 343 residues long: Ribosomal RNA small subunit methyltransferase C (343 aa).

This sequence belongs to the methyltransferase superfamily. RsmC family. Monomer.

The protein localises to the cytoplasm. The enzyme catalyses guanosine(1207) in 16S rRNA + S-adenosyl-L-methionine = N(2)-methylguanosine(1207) in 16S rRNA + S-adenosyl-L-homocysteine + H(+). Its function is as follows. Specifically methylates the guanine in position 1207 of 16S rRNA in the 30S particle. In Escherichia coli O6:H1 (strain CFT073 / ATCC 700928 / UPEC), this protein is Ribosomal RNA small subunit methyltransferase C.